The chain runs to 172 residues: ATP synthase subunit b (172 aa).

A helical membrane pass occupies residues 18-38 (IVWSLIILVIVAVFFYKFFMP).

It belongs to the ATPase B chain family. As to quaternary structure, F-type ATPases have 2 components, F(1) - the catalytic core - and F(0) - the membrane proton channel. F(1) has five subunits: alpha(3), beta(3), gamma(1), delta(1), epsilon(1). F(0) has three main subunits: a(1), b(2) and c(10-14). The alpha and beta chains form an alternating ring which encloses part of the gamma chain. F(1) is attached to F(0) by a central stalk formed by the gamma and epsilon chains, while a peripheral stalk is formed by the delta and b chains.

The protein resides in the cell membrane. F(1)F(0) ATP synthase produces ATP from ADP in the presence of a proton or sodium gradient. F-type ATPases consist of two structural domains, F(1) containing the extramembraneous catalytic core and F(0) containing the membrane proton channel, linked together by a central stalk and a peripheral stalk. During catalysis, ATP synthesis in the catalytic domain of F(1) is coupled via a rotary mechanism of the central stalk subunits to proton translocation. Its function is as follows. Component of the F(0) channel, it forms part of the peripheral stalk, linking F(1) to F(0). The chain is ATP synthase subunit b from Bifidobacterium longum (strain DJO10A).